We begin with the raw amino-acid sequence, 245 residues long: MSGHSKWHNIQAKKGKTDAKRGKIFTKIGKEIVMAVKNGGANQDINAKLRDVVAKAKAANMPNDTISKAIKKASGELSSVNYENIVYEGYGPSGVAVIVETLTDNKNRSAGNVRSAFTKGGGNMGTSGCVSFMFQEKGEIVIEKEDKDEDELMMIALDAGAEDFASEEEVFVVTTAPEEFGTVREALEAQGIEFLEASVKMIPDTYTAIDEADAKKFQKMLDLLDDDDDVQEVYHNAEFPEGWDE.

This sequence belongs to the TACO1 family.

Its subcellular location is the cytoplasm. This Clostridium beijerinckii (strain ATCC 51743 / NCIMB 8052) (Clostridium acetobutylicum) protein is Probable transcriptional regulatory protein Cbei_4222.